The chain runs to 149 residues: Large ribosomal subunit protein bL9 (149 aa).

This sequence belongs to the bacterial ribosomal protein bL9 family.

Its function is as follows. Binds to the 23S rRNA. This chain is Large ribosomal subunit protein bL9, found in Aliivibrio salmonicida (strain LFI1238) (Vibrio salmonicida (strain LFI1238)).